The sequence spans 459 residues: Mitochondrial distribution and morphology protein 34 (459 aa).

The 190-residue stretch at 1-190 (MSFRFNEAVF…LPSLIFNTSQ (190 aa)) folds into the SMP-LTD domain. Residues 338 to 347 (RSNSNDDNAK) are compositionally biased toward basic and acidic residues. The disordered stretch occupies residues 338–375 (RSNSNDDNAKPRRRKIKCKKTRTPSNLQSQGEQAVDDS). Basic residues predominate over residues 348–359 (PRRRKIKCKKTR).

This sequence belongs to the MDM34 family. As to quaternary structure, component of the ER-mitochondria encounter structure (ERMES) or MDM complex, composed of MMM1, MDM10, MDM12 and MDM34. Post-translationally, ubiquitinated by a SCF (SKP1-CUL1-F-box protein) E3 ubiquitin-protein ligase complex containing the F-box protein MDM30. Ubiquitination is important for mitochondrial integrity.

The protein resides in the mitochondrion outer membrane. Component of the ERMES/MDM complex, which serves as a molecular tether to connect the endoplasmic reticulum (ER) and mitochondria. Components of this complex are involved in the control of mitochondrial shape and protein biogenesis, and function in nonvesicular lipid trafficking between the ER and mitochondria. MDM34 is required for the interaction of the ER-resident membrane protein MMM1 and the outer mitochondrial membrane-resident beta-barrel protein MDM10. In Saccharomyces cerevisiae (strain RM11-1a) (Baker's yeast), this protein is Mitochondrial distribution and morphology protein 34.